The following is a 392-amino-acid chain: Antitrypsin (392 aa).

The signal sequence occupies residues 1–16 (MKTIICLFTIAIAAMA).

Belongs to the serpin family. As to expression, hemolymph.

The protein resides in the secreted. In terms of biological role, may play a role in the prophenoloxidase activating system in the silkworm hemolymph. This is Antitrypsin from Bombyx mori (Silk moth).